Reading from the N-terminus, the 404-residue chain is tRNA (carboxymethyluridine(34)-5-O)-methyltransferase (404 aa).

Serine 238 bears the Phosphoserine mark.

In terms of assembly, interacts with TRM112A and TRM112B.

It carries out the reaction 5-(carboxymethyl)uridine(34) in tRNA + S-adenosyl-L-methionine = 5-(2-methoxy-2-oxoethyl)uridine(34) in tRNA + S-adenosyl-L-homocysteine. Catalyzes the methylation of 5-carboxymethyl uridine to 5-methylcarboxymethyl uridine at the wobble position of the anticodon loop in tRNA via its methyltransferase domain. Catalyzes the last step in the formation of 5-methylcarboxymethyl uridine at the wobble position of the anticodon loop in target tRNA. This chain is tRNA (carboxymethyluridine(34)-5-O)-methyltransferase, found in Arabidopsis thaliana (Mouse-ear cress).